We begin with the raw amino-acid sequence, 243 residues long: uncharacterized protein (243 aa).

A disordered region spans residues 71-120; sequence KRTNVSQRNRKKGIKNNRPHKDINSSPDWGNAHRGTDWQSEKANGMNRAK. Residues 78–88 show a composition bias toward basic residues; it reads RNRKKGIKNNR. Serine 96 is modified (phosphoserine).

This is an uncharacterized protein from Saccharomyces cerevisiae (strain ATCC 204508 / S288c) (Baker's yeast).